We begin with the raw amino-acid sequence, 690 residues long: Glutaminase A (690 aa).

A signal peptide spans 1-20 (MMHFLSFCLSVASLVSYAGA). Residues Asn80, Asn96, Asn435, Asn508, Asn528, Asn538, and Asn571 are each glycosylated (N-linked (GlcNAc...) asparagine).

This sequence belongs to the fungal glutaminase gtaA family.

The protein localises to the secreted. The enzyme catalyses L-glutamine + H2O = L-glutamate + NH4(+). Its activity is regulated as follows. Activity is inhibited by about 80% in the presence of 18% sodium chloride. In terms of biological role, glutaminase catalyzes the hydrolysis of glutamine to glutamic acid and plays a key role in nitrogen metabolism. Catalyzes the hydrolysis not only of L-glutamine but also of D-glutamine. This is Glutaminase A from Aspergillus oryzae (strain ATCC 42149 / RIB 40) (Yellow koji mold).